The sequence spans 1174 residues: Ankyrin repeat and LEM domain-containing protein 2 homolog (1174 aa).

Low complexity-rich tracts occupy residues 37–56 (NPAS…SAAS), 150–164 (SSPT…SSPT), 174–198 (LGSN…SSSN), and 205–219 (QQQM…PQQP). 2 disordered regions span residues 37-74 (NPAS…YEDP) and 141-230 (PIIS…PFRA). The ANK repeat unit spans residues 338-367 (RGETPLHFAAKNGHVAMVEVLVSYPECKSL). Disordered stretches follow at residues 519–543 (AEAT…HNNN) and 961–981 (GSSS…SPGI). Polar residues predominate over residues 521-532 (ATSSPKPTKNVP). Residues 533–543 (NGTNECEHNNN) show a composition bias toward low complexity.

It belongs to the ANKLE2 family.

The protein resides in the endoplasmic reticulum. The protein localises to the nucleus envelope. It localises to the cytoplasm. In terms of biological role, involved in brain development probably by regulating asymmetric division of neuroblasts. Regulates neuroblast asymmetric cell division by controlling asymmetric protein localization of Mira, Baz, Par-6 and aPKC, and spindle alignment. Also, regulates the localization of kinase Ball during mitosis, specifically maintaining Ball in the nucleus during interphase. Required for proper ER and nuclear envelope morphology in neuroblasts. In Drosophila melanogaster (Fruit fly), this protein is Ankyrin repeat and LEM domain-containing protein 2 homolog.